Consider the following 427-residue polypeptide: Serine protease HTRA2, mitochondrial (427 aa).

Residues 33–57 are disordered; the sequence is HTASSSKGSGGDNSKDQENNGQNKS. The chain crosses the membrane as a helical span at residues 67-87; the sequence is VFQFCVPFSLGALVSAVLIEG. An IAP-binding motif is present at residues 78 to 81; the sequence is ALVS. Residues 144–307 form a serine protease region; the sequence is SNGSGFVIEQ…IPIDYVKVFL (164 aa). Active-site charge relay system residues include H162, D194, and S271. One can recognise a PDZ domain in the interval 330–415; it reads MGITMLTLTP…DLEIVILRGV (86 aa).

This sequence belongs to the peptidase S1C family. Interacts with th/DIAP1 (via BIR 2 domain).

It localises to the mitochondrion intermembrane space. It is found in the mitochondrion membrane. The catalysed reaction is Cleavage of non-polar aliphatic amino-acids at the P1 position, with a preference for Val, Ile and Met. At the P2 and P3 positions, Arg is selected most strongly with a secondary preference for other hydrophilic residues.. Serine protease that shows proteolytic activity against a non-specific substrate beta-casein. Promotes or induces cell death either by direct binding to and inhibition of BIRC proteins (also called inhibitor of apoptosis proteins, IAPs), leading to an increase in caspase activity, or by a BIRC inhibition-independent, caspase-independent and serine protease activity-dependent mechanism. Can antagonize antiapoptotic activity of th/Diap1 by directly inducing the degradation of th/Diap1. This chain is Serine protease HTRA2, mitochondrial, found in Drosophila persimilis (Fruit fly).